Consider the following 698-residue polypeptide: Serotransferrin (698 aa).

The N-terminal stretch at 1 to 19 (MRLAVGALLVCAVLGLCLA) is a signal peptide. 2 Transferrin-like domains span residues 25-347 (VRWC…NLRE) and 361-683 (VKWC…NLRK). 2 disulfides stabilise this stretch: C28-C67 and C38-C58. Dimethylated arginine is present on R42. S51 carries an O-linked (GalNAc...) serine glycan. Residues D82 and Y114 each contribute to the Fe(3+) site. 17 disulfide bridges follow: C137–C213, C156–C350, C177–C193, C180–C196, C190–C198, C246–C260, C358–C615, C364–C396, C374–C387, C421–C693, C437–C656, C469–C542, C493–C684, C503–C517, C514–C525, C582–C596, and C634–C639. Positions 139, 143, 145, and 146 each coordinate hydrogencarbonate. Position 207 (Y207) interacts with Fe(3+). H268 lines the Fe(3+) pocket. S389 is subject to Phosphoserine. Fe(3+)-binding residues include D411 and Y445. Residues T471, R475, A477, and G478 each coordinate hydrogencarbonate. Y536 lines the Fe(3+) pocket. H604 provides a ligand contact to Fe(3+). N630 carries an N-linked (GlcNAc...) asparagine glycan. S685 carries the post-translational modification Phosphoserine.

Belongs to the transferrin family. Monomer. Part of a complex composed of SLC40A1/ferroportin, TF/transferrin and HEPH/hephaestin that transfers iron from cells to transferrin. In terms of tissue distribution, expressed by the liver and secreted in plasma.

The protein resides in the secreted. Its function is as follows. Transferrins are iron binding transport proteins which can bind two Fe(3+) ions in association with the binding of an anion, usually bicarbonate. It is responsible for the transport of iron from sites of absorption and heme degradation to those of storage and utilization. Serum transferrin may also have a further role in stimulating cell proliferation. The sequence is that of Serotransferrin (TF) from Pan troglodytes (Chimpanzee).